A 395-amino-acid chain; its full sequence is Cyclic AMP-responsive element-binding protein 3-like protein 4 (395 aa).

At 1-295 (MDLGIPDLLD…QTSNKAAQTS (295 aa)) the chain is on the cytoplasmic side. Positions 82 to 108 (EASPGSDSGISEDPCHPDSPPAPRATS) are disordered. The region spanning 217–280 (VLKKVRRKIR…ISLVAQLRQL (64 aa)) is the bZIP domain. Positions 219–248 (KKVRRKIRNKQSAQDSRRRKKEYIDGLESR) are basic motif. The interval 259-280 (LQKKVQELERHNISLVAQLRQL) is leucine-zipper. The chain crosses the membrane as a helical; Signal-anchor for type II membrane protein span at residues 296–316 (TCVLILLFSLALIILPSFSPF). Topologically, residues 317–395 (QSRPEAGSED…IRSVLHADEM (79 aa)) are lumenal. The tract at residues 355 to 395 (RLREPPGAKDANGSTRTLLEKMGGKPRPSGRIRSVLHADEM) is disordered. Asn366 carries N-linked (GlcNAc...) asparagine glycosylation.

The protein belongs to the bZIP family. ATF subfamily. In terms of assembly, binds DNA as a dimer. Post-translationally, N-glycosylated in the C-terminal region. Controlled by regulated intramembrane proteolysis (RIP). Following ER stress a fragment containing the cytoplasmic transcription factor domain is released by proteolysis. The cleavage seems to be performed sequentially by site-1 and site-2 proteases (PS1 and PS2). PS1 cleavage may be suppressed by a determinant in the C-terminal region. According to PubMed:11830526, exclusively expressed in the prostate. Expressed in breast and prostate cancer cell lines. Expressed in prostatic luminal epithelial cells (at protein level). Expression is significantly more abundant in prostate cancer than in benign prostatic tissue (prostatic hyperplasia). According to PubMed:12111373, also expressed in brain, pancreas and skeletal muscle, and at lower levels in small intestine, testis, leukocyte and thymus.

It is found in the endoplasmic reticulum membrane. Its subcellular location is the golgi apparatus membrane. It localises to the nucleus. Transcriptional activator that may play a role in the unfolded protein response. Binds to the UPR element (UPRE) but not to CRE element. Preferentially binds DNA with to the consensus sequence 5'-T[GT]ACGT[GA][GT]-3' and has transcriptional activation activity from UPRE. Binds to NF-kappa-B site and has transcriptional activation activity from NF-kappa-B-containing regulatory elements. In Homo sapiens (Human), this protein is Cyclic AMP-responsive element-binding protein 3-like protein 4 (CREB3L4).